Here is a 392-residue protein sequence, read N- to C-terminus: Pyruvate synthase subunit PorA (392 aa).

Heterotetramer of one alpha, one beta, one delta and one gamma chain.

It catalyses the reaction 2 oxidized [2Fe-2S]-[ferredoxin] + pyruvate + CoA = 2 reduced [2Fe-2S]-[ferredoxin] + acetyl-CoA + CO2 + H(+). The sequence is that of Pyruvate synthase subunit PorA (porA) from Thermotoga maritima (strain ATCC 43589 / DSM 3109 / JCM 10099 / NBRC 100826 / MSB8).